The primary structure comprises 39 residues: Photosystem II reaction center protein L (39 aa).

The helical transmembrane segment at 18-38 (SLYLGVLSVLVLGILFSSYFF) threads the bilayer.

This sequence belongs to the PsbL family. As to quaternary structure, PSII is composed of 1 copy each of membrane proteins PsbA, PsbB, PsbC, PsbD, PsbE, PsbF, PsbH, PsbI, PsbJ, PsbK, PsbL, PsbM, PsbT, PsbX, PsbY, Psb30/Ycf12, peripheral proteins PsbO, CyanoQ (PsbQ), PsbU, PsbV and a large number of cofactors. It forms dimeric complexes.

The protein localises to the cellular thylakoid membrane. Its function is as follows. One of the components of the core complex of photosystem II (PSII). PSII is a light-driven water:plastoquinone oxidoreductase that uses light energy to abstract electrons from H(2)O, generating O(2) and a proton gradient subsequently used for ATP formation. It consists of a core antenna complex that captures photons, and an electron transfer chain that converts photonic excitation into a charge separation. This subunit is found at the monomer-monomer interface and is required for correct PSII assembly and/or dimerization. This Prochlorococcus marinus (strain MIT 9515) protein is Photosystem II reaction center protein L.